The chain runs to 409 residues: Growth-regulating factor 8 (409 aa).

Gly residues-rich tracts occupy residues 1-10 (MLSSCGGHGH) and 27-36 (QQGGGGGGGQ). The segment at 1–81 (MLSSCGGHGH…GGGGQMLSFS (81 aa)) is disordered. Residues 56 to 68 (SSSSFLGSTSSSC) are compositionally biased toward low complexity. The 36-residue stretch at 107 to 142 (PFTPTQWMELEHQALIYKHIAANVSVPSSLLLPIRR) folds into the QLQ domain. Residues 158 to 202 (DVEPRRCRRTDGKKWRCSRDAVGDQKYCERHINRGRHRSRKHVEG) form the WRC domain. 2 short sequence motifs (bipartite nuclear localization signal) span residues 163–173 (RCRRTDGKKWR) and 191–198 (RGRHRSRK). The interval 221-242 (SSRGHTVARQKQVKGSAATVSD) is disordered.

It belongs to the GRF family.

The protein resides in the nucleus. In terms of biological role, transcription activator that plays a regulatory role in gibberellin-induced stem elongation. This chain is Growth-regulating factor 8 (GRF8), found in Oryza sativa subsp. japonica (Rice).